The following is a 483-amino-acid chain: NADH-quinone oxidoreductase subunit N (483 aa).

Helical transmembrane passes span 9-29, 35-55, 69-89, 104-124, 158-178, 201-221, 234-254, 272-292, 297-317, 325-345, 368-388, 404-424, and 449-469; these read LVLP…WGAF, PLFT…AVVG, AAAT…IVLG, AVLV…GDLI, FVLG…IYGF, VGLL…VSAA, APTS…MMMF, VLII…LAQT, LWAY…ATGG, LLFM…LQAL, IAVA…FSGF, VLLQ…AFYY, and AVGF…LIWL.

This sequence belongs to the complex I subunit 2 family. In terms of assembly, NDH-1 is composed of 14 different subunits. Subunits NuoA, H, J, K, L, M, N constitute the membrane sector of the complex.

Its subcellular location is the cell inner membrane. The catalysed reaction is a quinone + NADH + 5 H(+)(in) = a quinol + NAD(+) + 4 H(+)(out). Its function is as follows. NDH-1 shuttles electrons from NADH, via FMN and iron-sulfur (Fe-S) centers, to quinones in the respiratory chain. The immediate electron acceptor for the enzyme in this species is believed to be ubiquinone. Couples the redox reaction to proton translocation (for every two electrons transferred, four hydrogen ions are translocated across the cytoplasmic membrane), and thus conserves the redox energy in a proton gradient. This is NADH-quinone oxidoreductase subunit N from Caulobacter sp. (strain K31).